A 414-amino-acid chain; its full sequence is Succinylornithine transaminase (414 aa).

At Lys260 the chain carries N6-(pyridoxal phosphate)lysine.

Belongs to the class-III pyridoxal-phosphate-dependent aminotransferase family. AstC subfamily. It depends on pyridoxal 5'-phosphate as a cofactor.

The catalysed reaction is N(2)-succinyl-L-ornithine + 2-oxoglutarate = N-succinyl-L-glutamate 5-semialdehyde + L-glutamate. It participates in amino-acid degradation; L-arginine degradation via AST pathway; L-glutamate and succinate from L-arginine: step 3/5. Catalyzes the transamination of N(2)-succinylornithine and alpha-ketoglutarate into N(2)-succinylglutamate semialdehyde and glutamate. Can also act as an acetylornithine aminotransferase. This Yersinia pseudotuberculosis serotype O:1b (strain IP 31758) protein is Succinylornithine transaminase.